Here is a 419-residue protein sequence, read N- to C-terminus: UDP-N-acetylglucosamine 1-carboxyvinyltransferase (419 aa).

22 to 23 (KN) provides a ligand contact to phosphoenolpyruvate. R92 contacts UDP-N-acetyl-alpha-D-glucosamine. C116 (proton donor) is an active-site residue. The residue at position 116 (C116) is a 2-(S-cysteinyl)pyruvic acid O-phosphothioketal. UDP-N-acetyl-alpha-D-glucosamine-binding positions include 121 to 125 (RPIDL), D306, and I328.

It belongs to the EPSP synthase family. MurA subfamily.

It is found in the cytoplasm. It carries out the reaction phosphoenolpyruvate + UDP-N-acetyl-alpha-D-glucosamine = UDP-N-acetyl-3-O-(1-carboxyvinyl)-alpha-D-glucosamine + phosphate. The protein operates within cell wall biogenesis; peptidoglycan biosynthesis. Cell wall formation. Adds enolpyruvyl to UDP-N-acetylglucosamine. Target for the antibiotic fosfomycin. Involved in heteroresistance to antibiotic fosfomycin. Heteroresistance is the ability of a clonal population to grow one or several subpopulations at a frequency of 10(-7) to 10(-3) in the presence of a higher antibiotic concentration than that predicted to be effective by measurement of the minimum inhibitory concentration (MIC). This Streptococcus pneumoniae serotype 2 (strain D39 / NCTC 7466) protein is UDP-N-acetylglucosamine 1-carboxyvinyltransferase.